Consider the following 257-residue polypeptide: Trans-aconitate 2-methyltransferase (257 aa).

The protein belongs to the methyltransferase superfamily. Tam family.

It localises to the cytoplasm. It catalyses the reaction trans-aconitate + S-adenosyl-L-methionine = (E)-3-(methoxycarbonyl)pent-2-enedioate + S-adenosyl-L-homocysteine. In terms of biological role, catalyzes the S-adenosylmethionine monomethyl esterification of trans-aconitate. The polypeptide is Trans-aconitate 2-methyltransferase (Rhizobium meliloti (strain 1021) (Ensifer meliloti)).